Here is a 572-residue protein sequence, read N- to C-terminus: Putative acyl-CoA synthetase CCNA_01223 (572 aa).

It belongs to the ATP-dependent AMP-binding enzyme family.

It functions in the pathway lipid metabolism; sphingolipid metabolism. Involved in de novo bacterial ceramide synthesis. The protein is Putative acyl-CoA synthetase CCNA_01223 of Caulobacter vibrioides (strain NA1000 / CB15N) (Caulobacter crescentus).